The primary structure comprises 61 residues: MSFLKKSLFLVLFLGFVSFSICEEEKREDEEEENEREENKESEEKRNQEERPPGFTPFRVD.

A signal peptide spans 1–22 (MSFLKKSLFLVLFLGFVSFSIC). Positions 23-50 (EEEKREDEEEENEREENKESEEKRNQEE) are excised as a propeptide. Positions 24-61 (EEKREDEEEENEREENKESEEKRNQEERPPGFTPFRVD) are disordered. Positions 26 to 36 (KREDEEEENER) are enriched in acidic residues. Residues 37-52 (EENKESEEKRNQEERP) are compositionally biased toward basic and acidic residues. Residue Pro-53 is modified to 4-hydroxyproline; in form [Hyp3,Thr6]-bradykinyl-Val,Asp and [Hyp3,Thr6]-bradykinin.

It belongs to the frog skin active peptide (FSAP) family. Bradykinin-related peptide subfamily. As to expression, expressed by the skin glands.

It is found in the secreted. Functionally, induces relaxation of rat smooth muscle from tail artery (EC(50)=16.8 nM) and contraction of that from ileum (EC(50)=205 nM), urinary bladder (EC(50)=895 nM) and uterus (EC(50)=60.3 nM). Binds to both bradykinin receptor B1 (BDKRB1) and B2 (BDKRB2). [Hyp3,Thr6]-bradykinin: Induces relaxation of rat smooth muscle from tail artery (EC(50)=56.7 nM) and contraction of that from ileum (EC(50)=588 nM), urinary bladder (EC(50)=4.6 uM) and uterus (EC(50)=3.9 nM). Binds to both bradykinin receptor B1 (BDKRB1) and B2 (BDKRB2). In arterial smooth muscle, the effect via BDKRB1 is stronger, in uterus, ileum and urinary bladder the effect via BDKRB2. In terms of biological role, induces relaxation of rat smooth muscle from tail artery (EC(50)=10.8 nM) and contraction of that from ileum (EC(50)=645 nM), urinary bladder (EC(50)=1.1 uM) and uterus (EC(50)=1.2 uM). Binds to both bradykinin receptor B1 (BDKRB1) and B2 (BDKRB2). Apart from uterus smooth muscle, the effect via BDKRB2 is stronger. Its function is as follows. [Hyp3,Thr6]-bradykinyl-Val,Asp: Induces relaxation of rat smooth muscle from tail artery (EC(50)=3.5 nM) and contraction of that from ileum (EC(50)=223 nM), urinary bladder (EC(50)=1.5 uM) and uterus (EC(50)=356 nM). Binds to both bradykinin receptor B1 (BDKRB1) and B2 (BDKRB2); the effects via BDKRB2 are stronger. The protein is [Thr6]-bradykinyl-Val,Asp of Agalychnis dacnicolor (Giant Mexican leaf frog).